A 182-amino-acid chain; its full sequence is UPF0690 protein C1orf52 homolog (182 aa).

The tract at residues 1-61 (MAAEEKDPLS…AEKRLPGPDE (61 aa)) is disordered. Residues 23–32 (SDEEDNSEPE) show a composition bias toward acidic residues. Positions 51–61 (KAEKRLPGPDE) are enriched in basic and acidic residues. The residue at position 67 (Thr67) is a Phosphothreonine. Position 132 is a phosphotyrosine (Tyr132). Residues 132 to 182 (YEDNGDDAPQNAKKARLLPEGEETVESDDEKDEHTSKKRKIELGEPTKKKK) are disordered. The span at 151-162 (EGEETVESDDEK) shows a compositional bias: acidic residues. Residue Ser158 is modified to Phosphoserine. Basic and acidic residues predominate over residues 172–182 (IELGEPTKKKK).

The protein belongs to the UPF0690 family.

In Bos taurus (Bovine), this protein is UPF0690 protein C1orf52 homolog.